Reading from the N-terminus, the 459-residue chain is Bifunctional protein GlmU (459 aa).

The interval 1–229 (MTNYAIILAA…FDESLGVNDR (229 aa)) is pyrophosphorylase. UDP-N-acetyl-alpha-D-glucosamine contacts are provided by residues 8 to 11 (LAAG), Lys-22, Gln-72, and 77 to 78 (GT). Position 102 (Asp-102) interacts with Mg(2+). Residues Gly-139, Glu-154, Asn-169, and Asn-227 each contribute to the UDP-N-acetyl-alpha-D-glucosamine site. Position 227 (Asn-227) interacts with Mg(2+). A linker region spans residues 230–250 (VALAKAEKVMRRRINHAHMVN). The segment at 251-459 (GVTLTNPAST…KKKPHHPNNK (209 aa)) is N-acetyltransferase. UDP-N-acetyl-alpha-D-glucosamine-binding residues include Arg-332 and Lys-350. The active-site Proton acceptor is His-362. 2 residues coordinate UDP-N-acetyl-alpha-D-glucosamine: Tyr-365 and Asn-376. Residues Ala-379, 385–386 (NY), Ser-404, Ala-422, and Arg-439 contribute to the acetyl-CoA site.

In the N-terminal section; belongs to the N-acetylglucosamine-1-phosphate uridyltransferase family. This sequence in the C-terminal section; belongs to the transferase hexapeptide repeat family. As to quaternary structure, homotrimer. Requires Mg(2+) as cofactor.

It localises to the cytoplasm. It carries out the reaction alpha-D-glucosamine 1-phosphate + acetyl-CoA = N-acetyl-alpha-D-glucosamine 1-phosphate + CoA + H(+). The catalysed reaction is N-acetyl-alpha-D-glucosamine 1-phosphate + UTP + H(+) = UDP-N-acetyl-alpha-D-glucosamine + diphosphate. Its pathway is nucleotide-sugar biosynthesis; UDP-N-acetyl-alpha-D-glucosamine biosynthesis; N-acetyl-alpha-D-glucosamine 1-phosphate from alpha-D-glucosamine 6-phosphate (route II): step 2/2. It functions in the pathway nucleotide-sugar biosynthesis; UDP-N-acetyl-alpha-D-glucosamine biosynthesis; UDP-N-acetyl-alpha-D-glucosamine from N-acetyl-alpha-D-glucosamine 1-phosphate: step 1/1. The protein operates within bacterial outer membrane biogenesis; LPS lipid A biosynthesis. Catalyzes the last two sequential reactions in the de novo biosynthetic pathway for UDP-N-acetylglucosamine (UDP-GlcNAc). The C-terminal domain catalyzes the transfer of acetyl group from acetyl coenzyme A to glucosamine-1-phosphate (GlcN-1-P) to produce N-acetylglucosamine-1-phosphate (GlcNAc-1-P), which is converted into UDP-GlcNAc by the transfer of uridine 5-monophosphate (from uridine 5-triphosphate), a reaction catalyzed by the N-terminal domain. This is Bifunctional protein GlmU from Streptococcus mutans serotype c (strain ATCC 700610 / UA159).